Consider the following 338-residue polypeptide: Glycerol-3-phosphate dehydrogenase [NAD(P)+] (338 aa).

Residues S13, W14, and K108 each contribute to the NADPH site. Residues K108, G139, and S141 each coordinate sn-glycerol 3-phosphate. A143 is a binding site for NADPH. Residues K194, D247, S257, R258, and N259 each contribute to the sn-glycerol 3-phosphate site. K194 functions as the Proton acceptor in the catalytic mechanism. Residue R258 coordinates NADPH. Residues V282 and E284 each contribute to the NADPH site.

This sequence belongs to the NAD-dependent glycerol-3-phosphate dehydrogenase family.

It is found in the cytoplasm. It catalyses the reaction sn-glycerol 3-phosphate + NAD(+) = dihydroxyacetone phosphate + NADH + H(+). The enzyme catalyses sn-glycerol 3-phosphate + NADP(+) = dihydroxyacetone phosphate + NADPH + H(+). It participates in membrane lipid metabolism; glycerophospholipid metabolism. Catalyzes the reduction of the glycolytic intermediate dihydroxyacetone phosphate (DHAP) to sn-glycerol 3-phosphate (G3P), the key precursor for phospholipid synthesis. The sequence is that of Glycerol-3-phosphate dehydrogenase [NAD(P)+] from Streptococcus gordonii (strain Challis / ATCC 35105 / BCRC 15272 / CH1 / DL1 / V288).